The primary structure comprises 191 residues: Guanylate kinase (191 aa).

The 179-residue stretch at 10 to 188 (GQLIVLTGPS…ALHRLVKLIG (179 aa)) folds into the Guanylate kinase-like domain. ATP is bound at residue 17-24 (GPSGVGKG).

Belongs to the guanylate kinase family.

The protein resides in the cytoplasm. It carries out the reaction GMP + ATP = GDP + ADP. In terms of biological role, essential for recycling GMP and indirectly, cGMP. In Synechocystis sp. (strain ATCC 27184 / PCC 6803 / Kazusa), this protein is Guanylate kinase (gmk).